The primary structure comprises 172 residues: Adenine phosphoribosyltransferase (172 aa).

It belongs to the purine/pyrimidine phosphoribosyltransferase family. In terms of assembly, homodimer.

The protein localises to the cytoplasm. It catalyses the reaction AMP + diphosphate = 5-phospho-alpha-D-ribose 1-diphosphate + adenine. It participates in purine metabolism; AMP biosynthesis via salvage pathway; AMP from adenine: step 1/1. Catalyzes a salvage reaction resulting in the formation of AMP, that is energically less costly than de novo synthesis. This is Adenine phosphoribosyltransferase from Methanococcus maripaludis (strain DSM 14266 / JCM 13030 / NBRC 101832 / S2 / LL).